A 337-amino-acid chain; its full sequence is Phenylalanine--tRNA ligase alpha subunit (337 aa).

Position 258 (glutamate 258) interacts with Mg(2+).

The protein belongs to the class-II aminoacyl-tRNA synthetase family. Phe-tRNA synthetase alpha subunit type 1 subfamily. As to quaternary structure, tetramer of two alpha and two beta subunits. The cofactor is Mg(2+).

The protein localises to the cytoplasm. The enzyme catalyses tRNA(Phe) + L-phenylalanine + ATP = L-phenylalanyl-tRNA(Phe) + AMP + diphosphate + H(+). This is Phenylalanine--tRNA ligase alpha subunit from Burkholderia cenocepacia (strain ATCC BAA-245 / DSM 16553 / LMG 16656 / NCTC 13227 / J2315 / CF5610) (Burkholderia cepacia (strain J2315)).